The primary structure comprises 338 residues: Ornithine carbamoyltransferase, catabolic (338 aa).

Residues 58-61 (STRT), Q85, R109, and 136-139 (HPTQ) contribute to the carbamoyl phosphate site. Residues N168, D232, and 236 to 237 (SM) each bind L-ornithine. Residues 273-274 (CL) and R318 each bind carbamoyl phosphate.

The protein belongs to the aspartate/ornithine carbamoyltransferase superfamily. OTCase family.

Its subcellular location is the cytoplasm. It catalyses the reaction carbamoyl phosphate + L-ornithine = L-citrulline + phosphate + H(+). It functions in the pathway amino-acid degradation; L-arginine degradation via ADI pathway; carbamoyl phosphate from L-arginine: step 2/2. Reversibly catalyzes the transfer of the carbamoyl group from carbamoyl phosphate (CP) to the N(epsilon) atom of ornithine (ORN) to produce L-citrulline. This is Ornithine carbamoyltransferase, catabolic from Streptococcus pneumoniae serotype 4 (strain ATCC BAA-334 / TIGR4).